The following is a 293-amino-acid chain: Small ribosomal subunit biogenesis GTPase RsgA (293 aa).

Positions 63–223 constitute a CP-type G domain; the sequence is KNELVRPPIA…VADTPGFSSL (161 aa). GTP is bound by residues 112-115 and 166-174; these read SKMD and GQSGVGKSS. Zn(2+) is bound by residues Cys-247, Cys-252, His-254, and Cys-260.

The protein belongs to the TRAFAC class YlqF/YawG GTPase family. RsgA subfamily. In terms of assembly, monomer. Associates with 30S ribosomal subunit, binds 16S rRNA. Requires Zn(2+) as cofactor.

The protein localises to the cytoplasm. One of several proteins that assist in the late maturation steps of the functional core of the 30S ribosomal subunit. Helps release RbfA from mature subunits. May play a role in the assembly of ribosomal proteins into the subunit. Circularly permuted GTPase that catalyzes slow GTP hydrolysis, GTPase activity is stimulated by the 30S ribosomal subunit. The protein is Small ribosomal subunit biogenesis GTPase RsgA of Bacillus cytotoxicus (strain DSM 22905 / CIP 110041 / 391-98 / NVH 391-98).